The sequence spans 182 residues: MGRSRESKGVILEELKTSLSEAQLTMVIDYQGLTVAEISNLRRKLRPTGTICKVTKNTLMGLAIAEDSGWEPMKSLLSGTSAFLLVKEDIGGAFKAYQEFKKESKKTELRGGVLKEGTKGQLLTEEQLKAIADLPSKEQLIAQVAGAINAIATKLARSINEVPASLARAVDAVARQEEKEAA.

The protein belongs to the universal ribosomal protein uL10 family. As to quaternary structure, part of the ribosomal stalk of the 50S ribosomal subunit. The N-terminus interacts with L11 and the large rRNA to form the base of the stalk. The C-terminus forms an elongated spine to which L12 dimers bind in a sequential fashion forming a multimeric L10(L12)X complex.

Forms part of the ribosomal stalk, playing a central role in the interaction of the ribosome with GTP-bound translation factors. The protein is Large ribosomal subunit protein uL10 of Microcystis aeruginosa (strain NIES-843 / IAM M-2473).